Here is a 310-residue protein sequence, read N- to C-terminus: Ribosomal RNA small subunit methyltransferase H (310 aa).

Residues 32-34 (GGH), Asp-52, Phe-79, Asp-100, and Gln-107 contribute to the S-adenosyl-L-methionine site.

This sequence belongs to the methyltransferase superfamily. RsmH family.

It is found in the cytoplasm. The enzyme catalyses cytidine(1402) in 16S rRNA + S-adenosyl-L-methionine = N(4)-methylcytidine(1402) in 16S rRNA + S-adenosyl-L-homocysteine + H(+). Functionally, specifically methylates the N4 position of cytidine in position 1402 (C1402) of 16S rRNA. The protein is Ribosomal RNA small subunit methyltransferase H of Bacillus cereus (strain ATCC 10987 / NRS 248).